A 165-amino-acid chain; its full sequence is MAESFSFDVVSDFERQELVNTLDQVKREISQRYDLKGTDTVVDLDKENIFITTNSELTLNSVNDIIRQKAIKRNLSLKIFDYGEIETVSGNKLKQTILLKQGIKQEIAKKISKSIRDQFKKINVSINGETLRVSSKSKNDLQLAIKLISQLEESLNIPLKANNFR.

It belongs to the YajQ family.

Functionally, nucleotide-binding protein. The sequence is that of Nucleotide-binding protein PMT9312_0481 from Prochlorococcus marinus (strain MIT 9312).